We begin with the raw amino-acid sequence, 33 residues long: Photosystem II reaction center protein Psb30 (33 aa).

A helical membrane pass occupies residues 5 to 25 (VVVQLGSLSLIVLAGPIIVLL).

It belongs to the Psb30/Ycf12 family. In terms of assembly, PSII is composed of 1 copy each of membrane proteins PsbA, PsbB, PsbC, PsbD, PsbE, PsbF, PsbH, PsbI, PsbJ, PsbK, PsbL, PsbM, PsbT, PsbX, PsbY, PsbZ, Psb30/Ycf12, peripheral proteins of the oxygen-evolving complex and a large number of cofactors. It forms dimeric complexes.

Its subcellular location is the plastid. The protein localises to the chloroplast thylakoid membrane. Functionally, a core subunit of photosystem II (PSII), probably helps stabilize the reaction center. In Mesostigma viride (Green alga), this protein is Photosystem II reaction center protein Psb30.